A 212-amino-acid chain; its full sequence is Imidazole glycerol phosphate synthase subunit HisH (212 aa).

In terms of domain architecture, Glutamine amidotransferase type-1 spans 1 to 212 (MLAILDYKAG…YEYCKEVSDA (212 aa)). C79 serves as the catalytic Nucleophile. Residues H187 and E189 contribute to the active site.

Heterodimer of HisH and HisF.

Its subcellular location is the cytoplasm. The catalysed reaction is 5-[(5-phospho-1-deoxy-D-ribulos-1-ylimino)methylamino]-1-(5-phospho-beta-D-ribosyl)imidazole-4-carboxamide + L-glutamine = D-erythro-1-(imidazol-4-yl)glycerol 3-phosphate + 5-amino-1-(5-phospho-beta-D-ribosyl)imidazole-4-carboxamide + L-glutamate + H(+). It catalyses the reaction L-glutamine + H2O = L-glutamate + NH4(+). The protein operates within amino-acid biosynthesis; L-histidine biosynthesis; L-histidine from 5-phospho-alpha-D-ribose 1-diphosphate: step 5/9. Its function is as follows. IGPS catalyzes the conversion of PRFAR and glutamine to IGP, AICAR and glutamate. The HisH subunit catalyzes the hydrolysis of glutamine to glutamate and ammonia as part of the synthesis of IGP and AICAR. The resulting ammonia molecule is channeled to the active site of HisF. This chain is Imidazole glycerol phosphate synthase subunit HisH, found in Maridesulfovibrio salexigens (strain ATCC 14822 / DSM 2638 / NCIMB 8403 / VKM B-1763) (Desulfovibrio salexigens).